A 983-amino-acid chain; its full sequence is MEPQVTLNVTFKNETQSFLVSDPENTTWADVEAMVKVSFDLNTIQIKYLDEENEEISINSQGEYEEALKMANIKQGNQLQMQVHEGCHVVDEVLPQTVVEKQATARTGKKPLAHYSSLVRVLGSDMKTTEEPTAEARSPVPCDTDKPQDKPPDWFTSYLEMFREQVVKETVEKLEQRLQEKLVLQKPPFSSSPSEVSMPISEEETLFLPENQFSWHIACSHCQKRIVGVRYQCSLCPSYNICEDCEAGPYSHDTNHILLKFRRPVVISSEPFFYSKYPTPRLPAALEQVRLQKQVDKNFVKAEKQRLRAEKKQRKAEVKELKKQLKLHRKIHLWNSIHGLQSPKSPLGRPESLLQSNTLMLPLQPCAPVMPTLSAAFVDENLPDGTHLQPGTKFIKHWRMKNTGNVKWSADTKLKFMWGNLTLASTEKKDVLVPCLKAGHIGVVSVEFIAPTLEGTYTLHWRLSHKGQQFGPRVWCSIIVDPFPSSESPVNLERDGISSSKADDFTCEQEEAFLLAEEEIPLGEVTKQTEGTGSSAPQKTQHAASERELYIPSVDLLTAQDLLSFELLDINIVQELERVPHNTPVDVTPRMSPLPHDSPLIEKPGLGRIQEESEGAGLKASPDSTVLTKRKAETPASVEETEEDLSGTQFVCETVIRSLTLDAAPDHNPPCRQRSPQRELQLYSTEEQQPLMLPGFCRKDSSLKFALPEEGPHGDEREEIVHIAEEEAIEEEDVQDEEVQSQSSASSEDYIIILPECFDTSRPLGDSMYSSALSQPGLERGAEGEPGIESGQEPAEARERLPERESQPKEQSISDILTTSQHLDTVPLVPEVAGLPAALSRSAPCGQYEAPRVDSPVTIQEVLPVPDHVRGEPRGSTGLANSRQKSCDHSRHHNGSSIAGGLVKGALSVAASAYKALFSGPPVTAQPVISEDQTAALMAHLFEMGFCDRQLNLRLLRKHNHNILQVVTELLQVNNNDWYSHRY.

A PB1 domain is found at 4 to 86 (QVTLNVTFKN…NQLQMQVHEG (83 aa)). Ser-117 carries the phosphoserine modification. The interval 126–149 (MKTTEEPTAEARSPVPCDTDKPQD) is disordered. The segment at 214 to 266 (SWHIACSHCQKRIVGVRYQCSLCPSYNICEDCEAGPYSHDTNHILLKFRRPVV) adopts a ZZ-type zinc-finger fold. Residues Cys-219, Cys-222, Cys-233, Cys-236, Cys-242, Cys-245, His-252, and His-256 each coordinate Zn(2+). 2 ATG8 family proteins-binding regions span residues 544–638 (ASER…PASV) and 745–756 (ASSEDYIIILPE). Thr-588 is subject to Phosphothreonine. Ser-592 and Ser-598 each carry phosphoserine. The interval 611 to 645 (EESEGAGLKASPDSTVLTKRKAETPASVEETEEDL) is disordered. The interval 768-813 (MYSSALSQPGLERGAEGEPGIESGQEPAEARERLPERESQPKEQSI) is disordered. The segment covering 795–808 (AEARERLPERESQP) has biased composition (basic and acidic residues). Ser-855 bears the Phosphoserine mark. The tract at residues 867-894 (DHVRGEPRGSTGLANSRQKSCDHSRHHN) is disordered. One can recognise a UBA domain in the interval 930-974 (SEDQTAALMAHLFEMGFCDRQLNLRLLRKHNHNILQVVTELLQVN).

In terms of assembly, homooligomer and heterooligomer. Interacts with TRIM55. Interacts with titin/TTN. Interacts with RNF29, USP8, MAP1LC3A, MAP1LC3B, MAP1LC3C, GABARAP, GABARAPL1 and GABARAPL2. Binds to ubiquitin and ubiquitinated proteins. Interacts with SQSTM1. Interacts with TAX1BP1. Interacts with IRF3; this interaction mediates autophagic degradation of IRF3. Interacts with IL12A and IL12B. Phosphorylated by GSK3A; this phosphorylation inhibits NBR1 involvement in the formation of ubiquitinated protein aggregates.

It localises to the cytoplasm. The protein localises to the cytoplasmic vesicle. Its subcellular location is the autophagosome. It is found in the lysosome. The protein resides in the myofibril. It localises to the sarcomere. The protein localises to the m line. Its function is as follows. Ubiquitin-binding autophagy adapter that participates in different processes including host defense or intracellular homeostasis. Possesses a double function during the selective autophagy by acting as a shuttle bringing ubiquitinated proteins to autophagosomes and also by participating in the formation of protein aggregates. Plays a role in the regulation of the innate immune response by modulating type I interferon production and targeting ubiquitinated IRF3 for autophagic degradation. In response to oxidative stress, promotes an increase in SQSTM1 levels, phosphorylation, and body formation by preventing its autophagic degradation. In turn, activates the KEAP1-NRF2/NFE2L2 antioxidant pathway. Also plays non-autophagy role by mediating the shuttle of IL-12 to late endosome for subsequent secretion. In Rattus norvegicus (Rat), this protein is Next to BRCA1 gene 1 protein (Nbr1).